Consider the following 448-residue polypeptide: Pre-mRNA-splicing factor SAD1 (448 aa).

Position 1 is an N-acetylmethionine (Met-1). The UBP-type; degenerate zinc-finger motif lies at 27–124 (PNYAYLETVV…NSIKFAAYPT (98 aa)). Zn(2+)-binding residues include Cys-60, Cys-63, His-79, and His-85. Residues 150 to 447 (IGFTNAATYD…ETFIQVWEKQ (298 aa)) enclose the USP domain.

In terms of assembly, component of the 45S U1.U2.U4/U6.U5 penta-snRNP particle, a subcomplex of the spliceosome.

It is found in the nucleus. In terms of biological role, promotes the assembly of newly synthesized U4 snRNA into the U4/U6 snRNP particle. Required for splicing of pre-mRNA. In Saccharomyces cerevisiae (strain ATCC 204508 / S288c) (Baker's yeast), this protein is Pre-mRNA-splicing factor SAD1 (SAD1).